Consider the following 534-residue polypeptide: CTP synthase (534 aa).

The interval 1 to 265 (MKYIVVTGGV…TTRLMKHLKL (265 aa)) is amidoligase domain. A CTP-binding site is contributed by Ser12. Ser12 lines the UTP pocket. An ATP-binding site is contributed by 13-18 (GLGKGI). Tyr53 serves as a coordination point for L-glutamine. Asp70 is a binding site for ATP. Mg(2+)-binding residues include Asp70 and Glu140. CTP-binding positions include 147–149 (DIE), 186–191 (KTKPSQ), and Lys222. UTP contacts are provided by residues 186 to 191 (KTKPSQ) and Lys222. Positions 289–530 (KLAIVGKYTN…VRAMCKYNKE (242 aa)) constitute a Glutamine amidotransferase type-1 domain. Gly352 is a binding site for L-glutamine. Cys379 serves as the catalytic Nucleophile; for glutamine hydrolysis. Residues 380–383 (LGMQ), Glu403, and Arg460 contribute to the L-glutamine site. Active-site residues include His503 and Glu505.

This sequence belongs to the CTP synthase family. Homotetramer.

The enzyme catalyses UTP + L-glutamine + ATP + H2O = CTP + L-glutamate + ADP + phosphate + 2 H(+). The catalysed reaction is L-glutamine + H2O = L-glutamate + NH4(+). It catalyses the reaction UTP + NH4(+) + ATP = CTP + ADP + phosphate + 2 H(+). The protein operates within pyrimidine metabolism; CTP biosynthesis via de novo pathway; CTP from UDP: step 2/2. With respect to regulation, allosterically activated by GTP, when glutamine is the substrate; GTP has no effect on the reaction when ammonia is the substrate. The allosteric effector GTP functions by stabilizing the protein conformation that binds the tetrahedral intermediate(s) formed during glutamine hydrolysis. Inhibited by the product CTP, via allosteric rather than competitive inhibition. Its function is as follows. Catalyzes the ATP-dependent amination of UTP to CTP with either L-glutamine or ammonia as the source of nitrogen. Regulates intracellular CTP levels through interactions with the four ribonucleotide triphosphates. This Methanosarcina acetivorans (strain ATCC 35395 / DSM 2834 / JCM 12185 / C2A) protein is CTP synthase.